The primary structure comprises 619 residues: Probable transporter mch1 (619 aa).

A run of 12 helical transmembrane segments spans residues 88–108, 120–140, 147–167, 184–204, 219–239, 261–281, 377–397, 428–448, 480–500, 515–535, 541–561, and 589–609; these read VISCLGAGSITAFSLYGPLFL, AVSIAAEISMYLPVPLFGYLC, PLALLSGLVFGGGYLLAAFAY, VMVVAFVAIGTATSCMYLAAV, IMLAVPIAGFGLSGMWQSQVA, FLFLALFLFCLGVIGTFGLRI, TMWWLAVGFFLVTGPGEAYIN, IIALTSTIARLLTGSLSDFFA, LAFLLPSALLLSLGYLLLSSP, LIGLGYGSAFSLVPIIISVVW, GTNWGIVAMVPAAGAAMWGVI, and FWAVGCTLSVWVAVVAWILAW.

Belongs to the major facilitator superfamily.

Its subcellular location is the vacuole membrane. Its function is as follows. Probable transporter. The chain is Probable transporter mch1 (mch1) from Aspergillus fumigatus (strain ATCC MYA-4609 / CBS 101355 / FGSC A1100 / Af293) (Neosartorya fumigata).